The primary structure comprises 2959 residues: uncharacterized protein (2959 aa).

It is found in the virion. This is an uncharacterized protein from Acanthamoeba polyphaga mimivirus (APMV).